The primary structure comprises 150 residues: Arginine repressor (150 aa).

Belongs to the ArgR family.

The protein localises to the cytoplasm. It participates in amino-acid biosynthesis; L-arginine biosynthesis [regulation]. Functionally, regulates arginine biosynthesis genes. The sequence is that of Arginine repressor from Thermoanaerobacter sp. (strain X514).